A 113-amino-acid chain; its full sequence is MSTEFPMRIGAEVALPALQGWNAAAGRDAIEKRYRFDNFNAAFGFMARVAMFAEKMDHHPEWRNVYNRVDVTLTTHDAGGVTELDVRMAQFMDEAAGRLGATGLPARADQPRT.

The protein belongs to the pterin-4-alpha-carbinolamine dehydratase family.

It carries out the reaction (4aS,6R)-4a-hydroxy-L-erythro-5,6,7,8-tetrahydrobiopterin = (6R)-L-erythro-6,7-dihydrobiopterin + H2O. This Bordetella bronchiseptica (strain ATCC BAA-588 / NCTC 13252 / RB50) (Alcaligenes bronchisepticus) protein is Putative pterin-4-alpha-carbinolamine dehydratase.